Consider the following 682-residue polypeptide: Potassium-transporting ATPase ATP-binding subunit (682 aa).

Helical transmembrane passes span 34–54 (PVMFVVWAGSVLTTLLTLAMV), 58–78 (IAGSALFTGIISLWLWFTVLF), 219–239 (IALTILLIALTIVFLLATATL), and 254–274 (VLVALLVCLIPTTIGGLLSAI). Aspartate 307 serves as the catalytic 4-aspartylphosphate intermediate. Residues aspartate 344, glutamate 348, 377 to 384 (FTAQSRMS), and lysine 395 contribute to the ATP site. Residues aspartate 518 and aspartate 522 each coordinate Mg(2+). 3 helical membrane-spanning segments follow: residues 588–608 (FAIIPAAFAATYPQLNALNVM), 616–636 (AILSAVIFNALIIIFLIPLAL), and 662–682 (LLVPFIGIKVIDVLLTLLGLA).

It belongs to the cation transport ATPase (P-type) (TC 3.A.3) family. Type IA subfamily. As to quaternary structure, the system is composed of three essential subunits: KdpA, KdpB and KdpC.

It localises to the cell inner membrane. It carries out the reaction K(+)(out) + ATP + H2O = K(+)(in) + ADP + phosphate + H(+). In terms of biological role, part of the high-affinity ATP-driven potassium transport (or Kdp) system, which catalyzes the hydrolysis of ATP coupled with the electrogenic transport of potassium into the cytoplasm. This subunit is responsible for energy coupling to the transport system and for the release of the potassium ions to the cytoplasm. The protein is Potassium-transporting ATPase ATP-binding subunit of Salmonella dublin (strain CT_02021853).